The chain runs to 70 residues: Cytochrome c oxidase subunit 8B, mitochondrial (70 aa).

The N-terminal 24 residues, 1-24, are a transit peptide targeting the mitochondrion; the sequence is MPRLPPILRLLQAPAKFTVVPKAH. Residues 25-38 lie on the Mitochondrial matrix side of the membrane; the sequence is VSAKPAKTPTSAVE. Residues 39–60 form a helical membrane-spanning segment; it reads QAVGISAIVVGFMVPAGWVLAH. The Mitochondrial intermembrane segment spans residues 61-70; it reads LESYKKSSAA.

The protein belongs to the cytochrome c oxidase VIII family. In terms of assembly, component of the cytochrome c oxidase (complex IV, CIV), a multisubunit enzyme composed of 14 subunits. The complex is composed of a catalytic core of 3 subunits MT-CO1, MT-CO2 and MT-CO3, encoded in the mitochondrial DNA, and 11 supernumerary subunits COX4I, COX5A, COX5B, COX6A, COX6B, COX6C, COX7A, COX7B, COX7C, COX8 and NDUFA4, which are encoded in the nuclear genome. The complex exists as a monomer or a dimer and forms supercomplexes (SCs) in the inner mitochondrial membrane with NADH-ubiquinone oxidoreductase (complex I, CI) and ubiquinol-cytochrome c oxidoreductase (cytochrome b-c1 complex, complex III, CIII), resulting in different assemblies (supercomplex SCI(1)III(2)IV(1) and megacomplex MCI(2)III(2)IV(2)).

The protein localises to the mitochondrion inner membrane. Its pathway is energy metabolism; oxidative phosphorylation. Component of the cytochrome c oxidase, the last enzyme in the mitochondrial electron transport chain which drives oxidative phosphorylation. The respiratory chain contains 3 multisubunit complexes succinate dehydrogenase (complex II, CII), ubiquinol-cytochrome c oxidoreductase (cytochrome b-c1 complex, complex III, CIII) and cytochrome c oxidase (complex IV, CIV), that cooperate to transfer electrons derived from NADH and succinate to molecular oxygen, creating an electrochemical gradient over the inner membrane that drives transmembrane transport and the ATP synthase. Cytochrome c oxidase is the component of the respiratory chain that catalyzes the reduction of oxygen to water. Electrons originating from reduced cytochrome c in the intermembrane space (IMS) are transferred via the dinuclear copper A center (CU(A)) of subunit 2 and heme A of subunit 1 to the active site in subunit 1, a binuclear center (BNC) formed by heme A3 and copper B (CU(B)). The BNC reduces molecular oxygen to 2 water molecules using 4 electrons from cytochrome c in the IMS and 4 protons from the mitochondrial matrix. In Mus musculus (Mouse), this protein is Cytochrome c oxidase subunit 8B, mitochondrial (Cox8b).